The following is a 39-amino-acid chain: Decorsin (39 aa).

A high affinity binding domain region spans residues Cys-27 to Cys-38. The short motif at Arg-31–Asp-33 is the Cell attachment site element.

Belongs to the ornatin family.

The protein localises to the secreted. Inhibits fibrinogen interaction with platelet receptors expressed on glycoprotein IIb-IIIa complex. May prevent blood from clotting during either feeding and/or storage of ingested blood. The sequence is that of Decorsin from Macrobdella decora (North American leech).